Consider the following 437-residue polypeptide: Enolase 2 (437 aa).

Substrate is bound by residues histidine 160 and glutamate 169. Glutamate 212 functions as the Proton donor in the catalytic mechanism. Residues aspartate 247, glutamate 296, and aspartate 321 each coordinate Mg(2+). Glutamate 296 and aspartate 321 together coordinate substrate. Residue lysine 346 is the Proton acceptor of the active site. Residues 373–376 and lysine 397 each bind substrate; that span reads SHRS.

It belongs to the enolase family. As to quaternary structure, homodimer. Mg(2+) is required as a cofactor.

It is found in the cytoplasm. It carries out the reaction (2R)-2-phosphoglycerate = phosphoenolpyruvate + H2O. It participates in carbohydrate degradation; glycolysis; pyruvate from D-glyceraldehyde 3-phosphate: step 4/5. The protein is Enolase 2 (ENO2) of Candida glabrata (strain ATCC 2001 / BCRC 20586 / JCM 3761 / NBRC 0622 / NRRL Y-65 / CBS 138) (Yeast).